Consider the following 128-residue polypeptide: UPF0102 protein MAV_3752 (128 aa).

It belongs to the UPF0102 family.

In Mycobacterium avium (strain 104), this protein is UPF0102 protein MAV_3752.